The sequence spans 382 residues: Intermediate transcription factor 3 large subunit (382 aa).

Belongs to the poxviruses A23 family. Heterodimer of a 45 kDa and a 32 kDa subunit.

Its function is as follows. Acts with RNA polymerase to initiate transcription from intermediate gene promoters. This chain is Intermediate transcription factor 3 large subunit (VITF3L), found in Camelus.